Here is a 359-residue protein sequence, read N- to C-terminus: EGF-like domain containing protein 2 (359 aa).

The signal sequence occupies residues 1–20 (MPPFISHFFLLSTFASLALC). EGF-like domains lie at 21–55 (SFYCKNPGYPCLNGGTCLYNGECNCTSGFRGFNCG) and 61–93 (ISAACTVECHNKGICYNGDKCYCTKDYMGPTCQ). Intrachain disulfides connect Cys24/Cys37, Cys31/Cys43, Cys45/Cys54, Cys65/Cys75, Cys69/Cys81, and Cys83/Cys92.

As to expression, prismatic layer of shell (at protein level). Expressed primarily in the mantle with highest level in the mantle edge and lower level in the mantle pallium.

The protein localises to the secreted. The sequence is that of EGF-like domain containing protein 2 from Margaritifera margaritifera (Freshwater pearl mussel).